Reading from the N-terminus, the 396-residue chain is Argininosuccinate synthase (396 aa).

9–17 lines the ATP pocket; it reads AYSGGLDTS. Y85 provides a ligand contact to L-citrulline. An ATP-binding site is contributed by G115. L-aspartate contacts are provided by T117, N121, and D122. Position 121 (N121) interacts with L-citrulline. L-citrulline is bound by residues R125, S173, E258, and Y270.

This sequence belongs to the argininosuccinate synthase family. Type 1 subfamily. In terms of assembly, homotetramer.

It localises to the cytoplasm. The enzyme catalyses L-citrulline + L-aspartate + ATP = 2-(N(omega)-L-arginino)succinate + AMP + diphosphate + H(+). It functions in the pathway amino-acid biosynthesis; L-arginine biosynthesis; L-arginine from L-ornithine and carbamoyl phosphate: step 2/3. This is Argininosuccinate synthase from Streptococcus agalactiae serotype Ia (strain ATCC 27591 / A909 / CDC SS700).